A 156-amino-acid chain; its full sequence is Small ribosomal subunit protein uS7 (156 aa).

It belongs to the universal ribosomal protein uS7 family. In terms of assembly, part of the 30S ribosomal subunit. Contacts proteins S9 and S11.

One of the primary rRNA binding proteins, it binds directly to 16S rRNA where it nucleates assembly of the head domain of the 30S subunit. Is located at the subunit interface close to the decoding center, probably blocks exit of the E-site tRNA. The chain is Small ribosomal subunit protein uS7 from Mannheimia succiniciproducens (strain KCTC 0769BP / MBEL55E).